The chain runs to 144 residues: uncharacterized protein (144 aa).

Positions 1 to 23 (MVIPLRNKYGILFLIAVCIMVSG) are cleaved as a signal peptide. Positions 119–144 (QNGQRKTMTRIESKTGREEKDEKSKS) are disordered. Residues 127-144 (TRIESKTGREEKDEKSKS) show a composition bias toward basic and acidic residues.

This is an uncharacterized protein from Bacillus subtilis (strain 168).